Reading from the N-terminus, the 479-residue chain is Proline--tRNA ligase (479 aa).

The protein belongs to the class-II aminoacyl-tRNA synthetase family. ProS type 3 subfamily. Homodimer.

It is found in the cytoplasm. The enzyme catalyses tRNA(Pro) + L-proline + ATP = L-prolyl-tRNA(Pro) + AMP + diphosphate. In terms of biological role, catalyzes the attachment of proline to tRNA(Pro) in a two-step reaction: proline is first activated by ATP to form Pro-AMP and then transferred to the acceptor end of tRNA(Pro). This chain is Proline--tRNA ligase, found in Lachnospira eligens (strain ATCC 27750 / DSM 3376 / VPI C15-48 / C15-B4) (Eubacterium eligens).